The following is a 1306-amino-acid chain: MADTRGRWAWDVPGFEPPQPVVGAAAGMPLAPPTAMPRAPPTAMVARAAGADGAVVPVADRLDQLADSVQLAREDCLELRQEASDLLEYSNAKLGRVTRYLGFLADRTRKLDQAALETEARITPLIHEKKRLFNDLLTLKGNVKVFCRSRPLFEDEGSSVVEFPDDFTIRVNTGDESLTNPKKDYEFDRVYGPHIGQGELFHDVQPLVQSALDGYNVAIFAYGQSRSGKTHTLEGSSHDRGLYLRSFEELFDLSNSDTTSTSHFNFYITACELYNDQVRDLLSDSISPVPKVRMGVQESFVELVQEKVENPLEFSNSLKAALENRSANSLKVMVSHLIVTIHIHYRNYVTGEHLYSKLSLVDLPASECLLEEDANRDNVTDFLHVSKSLSALGDALASLSAKKEPVLSGNSRITQILADSLGSSSKTLLIVHVSPSASNLSRTLSTLSFSARAKNAELSLGNRDTIKKWKDVANDSRKELHDKEKEVLDLRQEVLGLKLSLKEANDQCTLLFNEVQKAWRVSSTLQADLKSENLMLAEKHRIEKEQNNQLRDQISRLLEVEQEQKIKMHERDLTIQSLQAKLKSIESQLNEALNSSDARSTIGSESASVISTPKMMESTADSSSVTKRLEEELAKRDALIEKLHEENEKLFDRLTEKSGLGSSPQAPSPSNKQTNAQGRDIGRSDSTKSQSSDVFPLPVSQDKAGNSGAIVKSSNELTKTTPAGEYLTSALMDFDPNQFEGVAAIADGANKLLMLPYFHCHRDYNETPPISDWCMVLAAVIKAGAAREHEILAEIRDAVFSFIRKMEPRKVMDTMLVSRVKILYIRSLLARSPELQSIKVSPVERFLEKSHTSRSRSSSRGSSPGRSPVHHHHDHGSRTSLIDEHVHGFKVNIKPERKSKFSSIVLKLRGIEEETWRQHVTGGKLREITEEAKAFAIGNKALAALFVHTPAGELQRQIRAWLAENFEFLSVTGGDVAGASGQLELLSTAIMDGWMAGLGTARPPSTDALGQLLSEYTKRVYTSQLHHLKDIAGTLATEVADDPAHVSKLRSALESVDHKRRKIMQQMRTDTVLLTKEEGGSPIRNPPTAAEDARLASLISLDNIIKQVKEVMRQSSARPLRKSKKKALLESLDDLLAQMPSLLDVDHPCAQKQIMEARKVVESLQEDPDEPATDLNSNTLGESEVSQWNVLQFNTGTSAPFIIKCGANSSCELVIKADQKIQEPKGDEIIRVVPKPSVLAEMSFEEIKGVFEELPEAISLLALARTADGTRARYSRLYRTLANKVPALKDIVAEMEKGGVFKDVRS.

Residues 142 to 456 (NVKVFCRSRP…LSFSARAKNA (315 aa)) enclose the Kinesin motor domain. 223–230 (GQSRSGKT) lines the ATP pocket. 2 coiled-coil regions span residues 466 to 507 (IKKW…ANDQ) and 540 to 595 (HRIE…ALNS). Polar residues-rich tracts occupy residues 592–611 (ALNS…SVIS) and 660–677 (LGSS…TNAQ). Disordered regions lie at residues 592 to 627 (ALNS…SVTK), 657 to 710 (KSGL…SGAI), and 849 to 881 (KSHT…RTSL). The segment covering 855–867 (SRSSSRGSSPGRS) has biased composition (low complexity).

The protein belongs to the TRAFAC class myosin-kinesin ATPase superfamily. Kinesin family. KIN-14 subfamily.

This chain is Kinesin-like protein KIN-14L, found in Oryza sativa subsp. japonica (Rice).